A 214-amino-acid polypeptide reads, in one-letter code: Lazarillo protein (214 aa).

The signal sequence occupies residues 1–21 (MIRRGLLSVTAALVLLSVSCS). 7 N-linked (GlcNAc...) asparagine glycosylation sites follow: asparagine 38, asparagine 74, asparagine 84, asparagine 90, asparagine 130, asparagine 158, and asparagine 161. Residue alanine 192 is the site of GPI-anchor amidated alanine attachment. Positions 193–214 (GAEHVVGAMLSVAIASLFALLH) are cleaved as a propeptide — removed in mature form.

Belongs to the calycin superfamily. Lipocalin family. N-glycosylated. In terms of processing, contains disulfide bonds. As to expression, expressed by a subset of neuroblasts, ganglion mother cells and neurons of the CNS; by all sensory neurons of the PNS.

Its subcellular location is the cell membrane. Functionally, putative role in axonal outgrowth and guidance, required for the navigation of identified commissural neurons. Could be a receptor the midline morphogen. This chain is Lazarillo protein, found in Schistocerca americana (American grasshopper).